The following is a 147-amino-acid chain: Hemoglobin subunit delta (147 aa).

A Globin domain is found at 3–147; the sequence is HLTPEEKTAV…VANALAHKYH (145 aa). Serine 51 carries the phosphoserine modification. 2 residues coordinate heme b: histidine 64 and histidine 93.

This sequence belongs to the globin family. In terms of assembly, heterotetramer of two delta chains and two alpha chains. Red blood cells.

The protein is Hemoglobin subunit delta (HBD) of Gorilla gorilla gorilla (Western lowland gorilla).